The chain runs to 154 residues: Myoglobin (154 aa).

A Globin domain is found at 2–148 (GLSDDEWHHV…FRNDMASKYK (147 aa)). His-65 contacts nitrite. Residue His-65 coordinates O2. His-94 contacts heme b.

This sequence belongs to the globin family. In terms of assembly, monomeric.

It localises to the cytoplasm. Its subcellular location is the sarcoplasm. The catalysed reaction is Fe(III)-heme b-[protein] + nitric oxide + H2O = Fe(II)-heme b-[protein] + nitrite + 2 H(+). It carries out the reaction H2O2 + AH2 = A + 2 H2O. Monomeric heme protein which primary function is to store oxygen and facilitate its diffusion within muscle tissues. Reversibly binds oxygen through a pentacoordinated heme iron and enables its timely and efficient release as needed during periods of heightened demand. Depending on the oxidative conditions of tissues and cells, and in addition to its ability to bind oxygen, it also has a nitrite reductase activity whereby it regulates the production of bioactive nitric oxide. Under stress conditions, like hypoxia and anoxia, it also protects cells against reactive oxygen species thanks to its pseudoperoxidase activity. This is Myoglobin (MB) from Graptemys geographica (Common map turtle).